The following is a 254-amino-acid chain: Alcohol dehydrogenase 1 (254 aa).

Residue 10-33 participates in NAD(+) binding; the sequence is FVAGLGGIGFDTSREIVKKGPKNL. Residue serine 138 participates in substrate binding. Tyrosine 151 serves as the catalytic Proton acceptor.

The protein belongs to the short-chain dehydrogenases/reductases (SDR) family. Homodimer.

The catalysed reaction is a primary alcohol + NAD(+) = an aldehyde + NADH + H(+). It carries out the reaction a secondary alcohol + NAD(+) = a ketone + NADH + H(+). The chain is Alcohol dehydrogenase 1 (Adh1) from Drosophila mojavensis (Fruit fly).